A 249-amino-acid polypeptide reads, in one-letter code: MKIVVTNDDGPHSPLLEPLVRGLEAVGNEVVVVVPERPRSAAGLARTYHKPLRVRRLGGYYVVNGFPADAVFLALKLIAPDAELVISGVNVGENIGIEATYGSGTVGAALQAGVLGVPSIAASMEVGGDVDFMIKVVEGAVASARAGLDGVLAVSINIPSVWKGGVYCVRKLARAVYRERLYEGVDPRGEKYYWRWGPRRSEFEPDTDAYYFYYMRGVTVLGLSESGVASVENFGRKLGQLIGAVKVDC.

A divalent metal cation-binding residues include aspartate 8, aspartate 9, serine 40, and asparagine 90.

The protein belongs to the SurE nucleotidase family. Requires a divalent metal cation as cofactor.

The protein resides in the cytoplasm. It catalyses the reaction a ribonucleoside 5'-phosphate + H2O = a ribonucleoside + phosphate. Nucleotidase that shows phosphatase activity on nucleoside 5'-monophosphates. The sequence is that of 5'-nucleotidase SurE 2 from Pyrobaculum aerophilum (strain ATCC 51768 / DSM 7523 / JCM 9630 / CIP 104966 / NBRC 100827 / IM2).